A 184-amino-acid polypeptide reads, in one-letter code: NADH-quinone oxidoreductase subunit B (184 aa).

C37, C38, C103, and C132 together coordinate [4Fe-4S] cluster.

This sequence belongs to the complex I 20 kDa subunit family. NDH-1 is composed of 14 different subunits. Subunits NuoB, C, D, E, F, and G constitute the peripheral sector of the complex. Requires [4Fe-4S] cluster as cofactor.

Its subcellular location is the cell membrane. It carries out the reaction a quinone + NADH + 5 H(+)(in) = a quinol + NAD(+) + 4 H(+)(out). Functionally, NDH-1 shuttles electrons from NADH, via FMN and iron-sulfur (Fe-S) centers, to quinones in the respiratory chain. The immediate electron acceptor for the enzyme in this species is believed to be a menaquinone. Couples the redox reaction to proton translocation (for every two electrons transferred, four hydrogen ions are translocated across the cytoplasmic membrane), and thus conserves the redox energy in a proton gradient. This chain is NADH-quinone oxidoreductase subunit B, found in Mycolicibacterium smegmatis (strain ATCC 700084 / mc(2)155) (Mycobacterium smegmatis).